The following is a 176-amino-acid chain: Ribosome rescue factor SmrB (176 aa).

A Smr domain is found at 93 to 168 (LDLHGYRQSE…GDAALLVLID (76 aa)).

Belongs to the SmrB family. Associates with collided ribosomes, but not with correctly translating polysomes.

Functionally, acts as a ribosome collision sensor. Detects stalled/collided disomes (pairs of ribosomes where the leading ribosome is stalled and a second ribosome has collided with it) and endonucleolytically cleaves mRNA at the 5' boundary of the stalled ribosome. Stalled/collided disomes form a new interface (primarily via the 30S subunits) that binds SmrB. Cleaved mRNA becomes available for tmRNA ligation, leading to ribosomal subunit dissociation and rescue of stalled ribosomes. This chain is Ribosome rescue factor SmrB, found in Shewanella sp. (strain MR-4).